The sequence spans 135 residues: Hydroxylaminobenzene mutase HabA (135 aa).

4 helical membrane-spanning segments follow: residues 5 to 25 (LFAS…LVPV), 33 to 55 (VAGH…LWPY), 67 to 87 (FWLL…AALW), and 113 to 133 (FLLF…LIGI).

It localises to the cell membrane. It catalyses the reaction N-phenylhydroxylamine = 2-aminophenol. Its function is as follows. Catalyzes the rearrangement of hydroxylaminobenzene to 2-aminophenol. Involved in the degradation of nitrobenzene. The protein is Hydroxylaminobenzene mutase HabA (habA) of Ectopseudomonas oleovorans (Pseudomonas oleovorans).